The primary structure comprises 97 residues: MRDWNILEEVWQVIQERAEHPSAGSYVSSVLTHRKGIDKSLEKVGEEAVEFILAAKNQVPERTVSEAADLLFHLLVALQASGTDVGDVLDELAARRK.

It belongs to the PRA-PH family.

The protein resides in the cytoplasm. The enzyme catalyses 1-(5-phospho-beta-D-ribosyl)-ATP + H2O = 1-(5-phospho-beta-D-ribosyl)-5'-AMP + diphosphate + H(+). Its pathway is amino-acid biosynthesis; L-histidine biosynthesis; L-histidine from 5-phospho-alpha-D-ribose 1-diphosphate: step 2/9. In Methanoculleus marisnigri (strain ATCC 35101 / DSM 1498 / JR1), this protein is Phosphoribosyl-ATP pyrophosphatase.